The chain runs to 581 residues: FAD-dependent monooxygenase DEP4 (581 aa).

43–46 is an FAD binding site; the sequence is VWSK. 54 to 56 contributes to the NADP(+) binding site; sequence FAQ. Valine 108 contacts FAD. NADP(+) is bound by residues 183–202, 219–220, and 351–352; these read VGRSKSSYDAVYHLLCEGKR, AP, and DI. An FAD-binding site is contributed by methionine 470.

The protein belongs to the FAD-binding monooxygenase family. FAD serves as cofactor.

Its pathway is polyketide biosynthesis. Its function is as follows. FAD-dependent monooxygenase; part of the gene cluster that mediates the biosynthesis of depudecin, a highly oxidized eleven-carbon linear polyketide that acts as a histone deacetylase (HDAC) inhibitor and makes a small contribution to pathogenesis. The reducing polyketide synthase DEP5 is the central enzyme in depudecin biosynthesis by yielding the backbone polyketide chain. The monooxygenases DEP2 and DEP4, as well as the uncharacterized protein DEP1, then act as tailoring enzymes to modify the intermediate polyketide chain into depudecin. This Alternaria brassicicola (Dark leaf spot agent) protein is FAD-dependent monooxygenase DEP4.